The chain runs to 241 residues: Large ribosomal subunit protein uL3 (241 aa).

Disordered regions lie at residues 139–166 (VSHR…PGHM) and 214–241 (ADAP…QEGA). Gln-151 is subject to N5-methylglutamine. Residues 229–241 (AAAEAPAAEQEGA) show a composition bias toward low complexity.

Part of the 50S ribosomal subunit. Forms a cluster with proteins L14 and L19. In terms of processing, methylated, on either Lys-155 or Lys-158. Post-translationally, methylated by PrmB.

Functionally, one of the primary rRNA binding proteins, it binds directly near the 3'-end of the 23S rRNA, where it nucleates assembly of the 50S subunit. The sequence is that of Large ribosomal subunit protein uL3 from Rhodopseudomonas palustris (strain ATCC BAA-98 / CGA009).